A 382-amino-acid polypeptide reads, in one-letter code: Serine/threonine-protein kinase (382 aa).

A compositionally biased stretch (basic and acidic residues) spans 1 to 10; the sequence is MENKQCDHLT. Residues 1-75 are disordered; the sequence is MENKQCDHLT…ASESDEDDDD (75 aa). Over residues 12–24 the composition is skewed to polar residues; that stretch reads WFSTTSDASESMD. Residues 45–75 are compositionally biased toward acidic residues; that stretch reads ADEDLYSDISEGDLEYSDCDSASESDEDDDD. The Protein kinase domain occupies 93–379; the sequence is YTVIKTLTPG…AEELLSYPMF (287 aa). ATP is bound by residues 99 to 107 and lysine 122; that span reads LTPGSEGRV. Aspartate 207 functions as the Proton acceptor in the catalytic mechanism.

This sequence belongs to the protein kinase superfamily. Ser/Thr protein kinase family.

It catalyses the reaction L-seryl-[protein] + ATP = O-phospho-L-seryl-[protein] + ADP + H(+). The enzyme catalyses L-threonyl-[protein] + ATP = O-phospho-L-threonyl-[protein] + ADP + H(+). This Equus caballus (Horse) protein is Serine/threonine-protein kinase (US2).